A 450-amino-acid chain; its full sequence is MARLGALVCCLLAAWHCRPGLGLPLAPAGTGPAVGQFWHVTDFHLDPTYHITGDHTKVCASSKGAEASDPGPFGDVMCDSPYRLIFSALDFIKNSGQKVSFMIWTGDSPPHVPVLELSTDKVINVTANITTTIQRLFPNLQVFPALGNHDYWPQDQLPVVNSKVYNAVANLWKPWLTEDAITTLRKGGFYTQKVSNNPKLRIISLNTNLYYGPNSVTLNQTDPANQFEWLENTLNISQQNKEKVYIIAHVPVGYLPYARGISAMRKYHNEKLIDIFRKYSDIIAGQFYGHTHRDSIMVLSDKKGKPVNSLFVAPAVTPVRSVLERLTNNPGVRLFQYDPRDYKLLDMLQYYLNLTDANLKGESNWKLEYNLTQAYDIQDLQPKSLYKLAKQFAIQESKQFIKYYKYFFVSYDSSVICQGKCKIFQICAIMNLDVISYTDCFRQYHMKHRL.

An N-terminal signal peptide occupies residues 1-22 (MARLGALVCCLLAAWHCRPGLG). Zn(2+) is bound by residues D42 and H44. C59 and C78 form a disulfide bridge. Residue D107 coordinates Zn(2+). Residue H111 participates in ATP binding. N-linked (GlcNAc...) asparagine glycans are attached at residues N124 and N128. Residue N148 coordinates Zn(2+). ATP contacts are provided by N148 and H149. 2 N-linked (GlcNAc...) asparagine glycosylation sites follow: N219 and N235. Residues H249, H290, and H292 each contribute to the Zn(2+) site. Residues N353 and N370 are each glycosylated (N-linked (GlcNAc...) asparagine). Intrachain disulfides connect C417–C421 and C427–C440.

Belongs to the acid sphingomyelinase family. Monomer. Homodimer; homodimerizes following 2',3'-cGAMP-binding. The cofactor is Zn(2+).

The protein resides in the secreted. The enzyme catalyses 2',3'-cGAMP + H2O = 5'-pGpA(2'-5') + H(+). The catalysed reaction is 5'-pGpA(2'-5') + H2O = 5'-GpA(2'-5') + phosphate. It carries out the reaction a ribonucleoside 5'-triphosphate + H2O = a ribonucleoside 5'-diphosphate + phosphate + H(+). It catalyses the reaction ATP + H2O = ADP + phosphate + H(+). Functionally, cyclic-nucleotide phosphodiesterase that acts as a negative regulator of innate immunity by mediating degradation of 2',3'-cGAMP, thereby inhibiting the cGAS-STING signaling. Specifically linearizes 2',3'-cGAMP into 2'5'-bond pGpA and further hydrolyzes pGpA to produce GpA. Also has in vitro nucleotide phosphodiesterase activity with nucleoside triphosphates, such as ATP. Has in vitro activity with p-nitrophenyl-TMP. Has lower activity with nucleoside diphosphates, and no activity with nucleoside monophosphates. Has in vitro activity with CDP-choline, giving rise to CMP and phosphocholine. Has in vitro activity with CDP-ethanolamine. Does not have sphingomyelin phosphodiesterase activity. This chain is Cyclic GMP-AMP phosphodiesterase SMPDL3A (SMPDL3A), found in Bos taurus (Bovine).